Here is a 373-residue protein sequence, read N- to C-terminus: Mannitol-1-phosphate 5-dehydrogenase (373 aa).

3-14 (ALHFGAGNIGRG) contacts NAD(+).

This sequence belongs to the mannitol dehydrogenase family.

It carries out the reaction D-mannitol 1-phosphate + NAD(+) = beta-D-fructose 6-phosphate + NADH + H(+). The protein is Mannitol-1-phosphate 5-dehydrogenase (mtlD) of Bacillus subtilis (strain 168).